Consider the following 121-residue polypeptide: UPF0102 protein BF0706 (121 aa).

This sequence belongs to the UPF0102 family.

This Bacteroides fragilis (strain YCH46) protein is UPF0102 protein BF0706.